Here is a 192-residue protein sequence, read N- to C-terminus: Der GTPase-activating protein YihI (192 aa).

Positions 1 to 80 (MSRTKKTRRI…KAAVKEVKDP (80 aa)) are disordered. Basic and acidic residues-rich tracts occupy residues 9 to 25 (RITD…KPEQ), 37 to 48 (TRYELDAKAREE), and 65 to 80 (DPAE…VKDP).

It belongs to the YihI family. In terms of assembly, interacts with Der.

In terms of biological role, a GTPase-activating protein (GAP) that modifies Der/EngA GTPase function. May play a role in ribosome biogenesis. The chain is Der GTPase-activating protein YihI from Actinobacillus pleuropneumoniae serotype 5b (strain L20).